We begin with the raw amino-acid sequence, 174 residues long: Gamma-crystallin E (174 aa).

2 Beta/gamma crystallin 'Greek key' domains span residues 2–40 and 41–83; these read GKIT…RVDS and GCWM…RLIP. The connecting peptide stretch occupies residues 84–87; that stretch reads HSSS. Beta/gamma crystallin 'Greek key' domains are found at residues 88 to 128 and 129 to 171; these read HRIK…HVME and GYWV…RRIM.

This sequence belongs to the beta/gamma-crystallin family. As to expression, detected in the superior olivary complex of the auditory hindbrain.

Crystallins are the dominant structural components of the vertebrate eye lens. The protein is Gamma-crystallin E (Cryge) of Mus musculus (Mouse).